Consider the following 242-residue polypeptide: Uridylate kinase (242 aa).

Position 17–20 (17–20 (KLGG)) interacts with ATP. UMP is bound at residue Gly-58. 2 residues coordinate ATP: Gly-59 and Arg-63. UMP contacts are provided by residues Asp-78 and 139–146 (MGMPYFST). Residues Phe-172 and Asp-175 each contribute to the ATP site.

This sequence belongs to the UMP kinase family. In terms of assembly, homohexamer.

It is found in the cytoplasm. The catalysed reaction is UMP + ATP = UDP + ADP. The protein operates within pyrimidine metabolism; CTP biosynthesis via de novo pathway; UDP from UMP (UMPK route): step 1/1. Inhibited by UTP. Its function is as follows. Catalyzes the reversible phosphorylation of UMP to UDP. The sequence is that of Uridylate kinase from Rhodococcus jostii (strain RHA1).